The primary structure comprises 202 residues: Imidazole glycerol phosphate synthase subunit HisH (202 aa).

Residues 3–202 (RIVIIDYGLG…KILRNFVEMC (200 aa)) form the Glutamine amidotransferase type-1 domain. The Nucleophile role is filled by cysteine 79. Residues histidine 183 and glutamate 185 contribute to the active site.

In terms of assembly, heterodimer of HisH and HisF.

It is found in the cytoplasm. It carries out the reaction 5-[(5-phospho-1-deoxy-D-ribulos-1-ylimino)methylamino]-1-(5-phospho-beta-D-ribosyl)imidazole-4-carboxamide + L-glutamine = D-erythro-1-(imidazol-4-yl)glycerol 3-phosphate + 5-amino-1-(5-phospho-beta-D-ribosyl)imidazole-4-carboxamide + L-glutamate + H(+). The enzyme catalyses L-glutamine + H2O = L-glutamate + NH4(+). It participates in amino-acid biosynthesis; L-histidine biosynthesis; L-histidine from 5-phospho-alpha-D-ribose 1-diphosphate: step 5/9. IGPS catalyzes the conversion of PRFAR and glutamine to IGP, AICAR and glutamate. The HisH subunit catalyzes the hydrolysis of glutamine to glutamate and ammonia as part of the synthesis of IGP and AICAR. The resulting ammonia molecule is channeled to the active site of HisF. This Methanosarcina mazei (strain ATCC BAA-159 / DSM 3647 / Goe1 / Go1 / JCM 11833 / OCM 88) (Methanosarcina frisia) protein is Imidazole glycerol phosphate synthase subunit HisH.